We begin with the raw amino-acid sequence, 367 residues long: Anhydro-N-acetylmuramic acid kinase (367 aa).

Glycine 11–aspartate 18 is a binding site for ATP.

Belongs to the anhydro-N-acetylmuramic acid kinase family.

It carries out the reaction 1,6-anhydro-N-acetyl-beta-muramate + ATP + H2O = N-acetyl-D-muramate 6-phosphate + ADP + H(+). It participates in amino-sugar metabolism; 1,6-anhydro-N-acetylmuramate degradation. It functions in the pathway cell wall biogenesis; peptidoglycan recycling. In terms of biological role, catalyzes the specific phosphorylation of 1,6-anhydro-N-acetylmuramic acid (anhMurNAc) with the simultaneous cleavage of the 1,6-anhydro ring, generating MurNAc-6-P. Is required for the utilization of anhMurNAc either imported from the medium or derived from its own cell wall murein, and thus plays a role in cell wall recycling. The chain is Anhydro-N-acetylmuramic acid kinase from Rhodopseudomonas palustris (strain ATCC BAA-98 / CGA009).